The chain runs to 73 residues: Toxin Td3 (73 aa).

Positions 1 to 7 (IGMVVEC) are cleaved as a signal peptide. Positions 8 to 70 (KDGYLMGPDG…VWERATNRCG (63 aa)) constitute an LCN-type CS-alpha/beta domain. 4 cysteine pairs are disulfide-bonded: cysteine 18/cysteine 69, cysteine 22/cysteine 44, cysteine 30/cysteine 50, and cysteine 34/cysteine 52. A Lysine amide modification is found at lysine 71.

This sequence belongs to the long (4 C-C) scorpion toxin superfamily. Sodium channel inhibitor family. Beta subfamily. As to expression, expressed by the venom gland.

The protein localises to the secreted. In terms of biological role, beta toxins bind voltage-independently at site-4 of sodium channels (Nav) and shift the voltage of activation toward more negative potentials thereby affecting sodium channel activation and promoting spontaneous and repetitive firing. The chain is Toxin Td3 from Tityus discrepans (Venezuelan scorpion).